The primary structure comprises 786 residues: Leucine-rich repeat extensin-like protein 2 (786 aa).

Positions 1-28 are cleaved as a signal peptide; the sequence is MLLFPSTSLRLFFFLFLLFSSCFLQIRG. N-linked (GlcNAc...) asparagine glycosylation is found at N73 and N79. 9 LRR repeats span residues 100-124, 125-147, 149-172, 173-196, 198-219, 221-243, 244-267, 268-291, and 292-315; these read TRVVAGIDLNHADMAGYLPRELGLL, TDLALFHLNSNRFCGEVPLTFKH, KLLFELDLSNNRFVGKFPNVVLSL, PSLKFLDLRYNEFEGSIPSKLFDK, LDAIFLNHNRFMFGIPENMGNS, VSALVLADNDLGGCIPGSIGLMG, KTLNEIILSNDNLTGCLPPQIGNL, KNVTVFDISFNRLSGPLPSSIGNM, and KSLEQLNVANNRFTGVIPSSICQL. N-linked (GlcNAc...) asparagine glycans are attached at residues N255 and N269. N320 and N346 each carry an N-linked (GlcNAc...) asparagine glycan. Disordered stretches follow at residues 352-372, 390-589, 624-645, and 694-786; these read IDGKEDQRSSKECSSPASRSV, FKMS…YYAV, PPVYYSPVTQSPPPPPPVYYPP, and PPPS…IPYY. Basic and acidic residues predominate over residues 353–362; the sequence is DGKEDQRSSK. A contains the Ser-Pro(4) repeats region spans residues 384–786; sequence SPPPPSFKMS…SPPPPSIPYY (403 aa). 3 stretches are compositionally biased toward pro residues: residues 460–477, 487–542, and 566–589; these read YPPPPPPPEYEPSPPPPS, YPPP…PPPK, and SPPPPTYYATQSPPPPPPPTYYAV. Pro residues-rich tracts occupy residues 694 to 713, 720 to 737, 752 to 769, and 777 to 786; these read PPPSPVYYPPVTQSPPPPST, PASPNQSPPPEYQSPPPK, PTPPSLPPPYYEDTPLPP, and SPPPPSIPYY.

Post-translationally, hydroxylated on proline residues in the S-P-P-P-P repeat. O-glycosylated on hydroxyprolines. Mostly expressed in roots, also present in stems at low levels. In roots, confined to differentiation zones, the collet, and meristematic cells of tips.

The protein resides in the secreted. It localises to the cell wall. Modulates cell morphogenesis by regulating cell wall formation and assembly, and/or growth polarization. Together with LRX2, component of the extracellular mechanism regulating root hair morphogenesis and elongation. This is Leucine-rich repeat extensin-like protein 2 (LRX2) from Arabidopsis thaliana (Mouse-ear cress).